Consider the following 302-residue polypeptide: Probable histone acetyltransferase Rv0428c (302 aa).

The catalysed reaction is L-lysyl-[histone] + acetyl-CoA = N(6)-acetyl-L-lysyl-[histone] + CoA + H(+). Functionally, shows histone acetyl transferase (HAT) activity with recombinant eukaryotic H3 histone expressed in bacteria as substrate and acetyl-CoA as donor. May be involved in survival under stress conditions. The protein is Probable histone acetyltransferase Rv0428c of Mycobacterium tuberculosis (strain ATCC 25618 / H37Rv).